A 220-amino-acid chain; its full sequence is Protein ABA DEFICIENT 4, chloroplastic (220 aa).

A chloroplast-targeting transit peptide spans 1–37 (MGFSSFISQPLSSSLSVMKRNVSAKRSELCLDSSKIR). The next 4 helical transmembrane spans lie at 77–97 (IASS…TLMV), 112–132 (SVPY…SWTP), 154–174 (MFSS…VDLF), and 195–215 (SLCL…KAII).

As to expression, expressed in root vasculature, root hairs, leaves, trichomes, sepals, stamens, stigma, pedicels, siliques and embryo.

The protein localises to the plastid. It is found in the chloroplast membrane. Required for neoxanthin biosynthesis, an intermediary step in abscisic acid (ABA) biosynthesis. Probably not involved directly in the enzymatic conversion of violaxanthin to neoxanthin. Cannot convert violaxanthin to neoxanthin in vitro. Required for ABA biosynthesis in response to drought stress. Required for neoxanthin biosynthesis which is involved in photoprotection of photosystem II (PSII). Neoxanthin acts as an antioxidant within the photosystem PSII supercomplex. In Arabidopsis thaliana (Mouse-ear cress), this protein is Protein ABA DEFICIENT 4, chloroplastic.